We begin with the raw amino-acid sequence, 107 residues long: UPF0145 protein YbjQ (107 aa).

Belongs to the UPF0145 family.

The protein is UPF0145 protein YbjQ of Escherichia coli O139:H28 (strain E24377A / ETEC).